Consider the following 356-residue polypeptide: UDP-N-acetylglucosamine--N-acetylmuramyl-(pentapeptide) pyrophosphoryl-undecaprenol N-acetylglucosamine transferase (356 aa).

2 residues coordinate UDP-N-acetyl-alpha-D-glucosamine: Ser195 and Gln287.

This sequence belongs to the glycosyltransferase 28 family. MurG subfamily.

The protein localises to the cell membrane. It catalyses the reaction Mur2Ac(oyl-L-Ala-gamma-D-Glu-L-Lys-D-Ala-D-Ala)-di-trans,octa-cis-undecaprenyl diphosphate + UDP-N-acetyl-alpha-D-glucosamine = beta-D-GlcNAc-(1-&gt;4)-Mur2Ac(oyl-L-Ala-gamma-D-Glu-L-Lys-D-Ala-D-Ala)-di-trans,octa-cis-undecaprenyl diphosphate + UDP + H(+). The protein operates within cell wall biogenesis; peptidoglycan biosynthesis. Cell wall formation. Catalyzes the transfer of a GlcNAc subunit on undecaprenyl-pyrophosphoryl-MurNAc-pentapeptide (lipid intermediate I) to form undecaprenyl-pyrophosphoryl-MurNAc-(pentapeptide)GlcNAc (lipid intermediate II). The polypeptide is UDP-N-acetylglucosamine--N-acetylmuramyl-(pentapeptide) pyrophosphoryl-undecaprenol N-acetylglucosamine transferase (Streptococcus gordonii (strain Challis / ATCC 35105 / BCRC 15272 / CH1 / DL1 / V288)).